A 729-amino-acid chain; its full sequence is 1,4-alpha-glucan branching enzyme GlgB (729 aa).

The active-site Nucleophile is Asp407. Glu460 acts as the Proton donor in catalysis.

The protein belongs to the glycosyl hydrolase 13 family. GlgB subfamily. As to quaternary structure, monomer.

The enzyme catalyses Transfers a segment of a (1-&gt;4)-alpha-D-glucan chain to a primary hydroxy group in a similar glucan chain.. Its pathway is glycan biosynthesis; glycogen biosynthesis. Catalyzes the formation of the alpha-1,6-glucosidic linkages in glycogen by scission of a 1,4-alpha-linked oligosaccharide from growing alpha-1,4-glucan chains and the subsequent attachment of the oligosaccharide to the alpha-1,6 position. In Pseudoalteromonas atlantica (strain T6c / ATCC BAA-1087), this protein is 1,4-alpha-glucan branching enzyme GlgB.